Reading from the N-terminus, the 238-residue chain is Uridylate kinase (238 aa).

12–15 (KLSG) serves as a coordination point for ATP. Residue G54 participates in UMP binding. Positions 55 and 59 each coordinate ATP. UMP-binding positions include D74 and 135–142 (TGNPYFTT). Residues T162, N163, Y168, and D171 each contribute to the ATP site.

This sequence belongs to the UMP kinase family. As to quaternary structure, homohexamer.

It localises to the cytoplasm. The enzyme catalyses UMP + ATP = UDP + ADP. The protein operates within pyrimidine metabolism; CTP biosynthesis via de novo pathway; UDP from UMP (UMPK route): step 1/1. Inhibited by UTP. Its function is as follows. Catalyzes the reversible phosphorylation of UMP to UDP. The chain is Uridylate kinase from Bradyrhizobium sp. (strain ORS 278).